The primary structure comprises 165 residues: PARP-type zinc finger-containing protein C13F5.07c (165 aa).

Residues 8 to 100 (YRIEIAPNNR…KVVDAINEGH (93 aa)) form a PARP-type; degenerate zinc finger. The span at 100 to 114 (HVSESDERESRKLGE) shows a compositional bias: basic and acidic residues. The segment at 100-165 (HVSESDERES…TDGSEAYEDD (66 aa)) is disordered. The span at 117 to 128 (NVNSQKLKTSSP) shows a compositional bias: polar residues. Positions 131 to 141 (VVRKNKRHHTT) are enriched in basic residues. The segment covering 149–165 (SDLDAEFTDGSEAYEDD) has biased composition (acidic residues).

It is found in the cytoplasm. It localises to the nucleus. The protein is PARP-type zinc finger-containing protein C13F5.07c of Schizosaccharomyces pombe (strain 972 / ATCC 24843) (Fission yeast).